Here is a 247-residue protein sequence, read N- to C-terminus: Diglucosylglycerate octanoyltransferase (247 aa).

Belongs to the OctT acyltransferase family. In terms of assembly, homotetramer.

The enzyme catalyses (2R)-2-O-[alpha-D-glucopyranosyl-(1-&gt;6)-alpha-D-glucopyranosyl]-glycerate + octanoyl-CoA = (2R)-2-O-[6-O-octanoyl-alpha-D-glucopyranosyl-(1-&gt;6)-alpha-D-glucopyranosyl]-glycerate + CoA. Sugar octanoyltransferase likely involved in the biosynthesis of mycobacterial methylglucose lipopolysaccharide (MGLP). Catalyzes the transfer of an octanoyl group from octanoyl-CoA to the C6 OH of the second glucose in diglucosylglycerate (DGG). DGG is the preferred acceptor, but to a lesser extent, GG (glucosylglycerate) can also be used as substrate. DGG and GG are the two earliest intermediates in MGLP biosynthesis. This Mycobacterium tuberculosis (strain ATCC 25618 / H37Rv) protein is Diglucosylglycerate octanoyltransferase.